The following is a 113-amino-acid chain: uncharacterized protein (113 aa).

This is an uncharacterized protein from Bacillus subtilis (strain 168).